Reading from the N-terminus, the 207-residue chain is Nudix hydrolase 4 (207 aa).

The Nudix hydrolase domain occupies 58 to 194 (GYRQVVGCVP…WMREALEAFI (137 aa)). A Nudix box motif is present at residues 101–122 (GGWETDESMEEAALRETIEEAG). Mg(2+) contacts are provided by Glu116 and Glu120.

The protein belongs to the Nudix hydrolase family. It depends on Mg(2+) as a cofactor. Requires Mn(2+) as cofactor. As to expression, expressed in roots, stems and leaves.

The catalysed reaction is ADP-D-ribose + H2O = D-ribose 5-phosphate + AMP + 2 H(+). It catalyses the reaction NAD(+) + H2O = beta-nicotinamide D-ribonucleotide + AMP + 2 H(+). It carries out the reaction NADH + H2O = reduced beta-nicotinamide D-ribonucleotide + AMP + 2 H(+). Probably mediates the hydrolysis of some nucleoside diphosphate derivatives. In vitro, it can use both NADH and ADP-ribose as substrates; however the relevance of such substrates in vivo is unclear. This is Nudix hydrolase 4 (NUDT4) from Arabidopsis thaliana (Mouse-ear cress).